The chain runs to 155 residues: Pathogenesis-related protein STH-21 (155 aa).

Belongs to the BetVI family.

The chain is Pathogenesis-related protein STH-21 (STH-21) from Solanum tuberosum (Potato).